Here is a 116-residue protein sequence, read N- to C-terminus: MSHLLDSVDSASLRSDLPAFRPGDTVNVHVRVIEGNRSRVQQFKGVVIRRQGAGVRETFTVRKVSFSVGVERTFPVHTPIVEKIELVTRGDVRRAKLYYLRELRGKAAKIKEKRES.

This sequence belongs to the bacterial ribosomal protein bL19 family.

In terms of biological role, this protein is located at the 30S-50S ribosomal subunit interface and may play a role in the structure and function of the aminoacyl-tRNA binding site. The chain is Large ribosomal subunit protein bL19 from Streptomyces avermitilis (strain ATCC 31267 / DSM 46492 / JCM 5070 / NBRC 14893 / NCIMB 12804 / NRRL 8165 / MA-4680).